The following is a 281-amino-acid chain: NAD kinase (281 aa).

Catalysis depends on D61, which acts as the Proton acceptor. NAD(+) contacts are provided by residues 61 to 62 (DG), 134 to 135 (ND), R145, D164, 175 to 180 (TAYSLS), and Q234.

It belongs to the NAD kinase family. A divalent metal cation is required as a cofactor.

The protein resides in the cytoplasm. It carries out the reaction NAD(+) + ATP = ADP + NADP(+) + H(+). Functionally, involved in the regulation of the intracellular balance of NAD and NADP, and is a key enzyme in the biosynthesis of NADP. Catalyzes specifically the phosphorylation on 2'-hydroxyl of the adenosine moiety of NAD to yield NADP. This Clostridium botulinum (strain Loch Maree / Type A3) protein is NAD kinase.